The following is a 693-amino-acid chain: Testis-specific Y-encoded-like protein 2 (693 aa).

2 disordered regions span residues 1–56 (MDRP…EAAQ) and 104–125 (GYGE…EASG). Residue K11 forms a Glycyl lysine isopeptide (Lys-Gly) (interchain with G-Cter in SUMO2) linkage. 2 positions are modified to phosphoserine: S18 and S20. Positions 23–44 (RDPPPPPPPPPLLRLPLPPPQQ) are enriched in pro residues. Glycyl lysine isopeptide (Lys-Gly) (interchain with G-Cter in SUMO2) cross-links involve residues K163 and K165. Residues 175 to 207 (EDEDERESMRSSRRRRRRRRRKQRKVKRESRER) form a disordered region. Positions 185-202 (SSRRRRRRRRRKQRKVKR) are enriched in basic residues. Residue T340 is modified to Phosphothreonine. Disordered stretches follow at residues 474–605 (ENIC…DIEY) and 627–693 (ISDE…GKTG). A compositionally biased stretch (polar residues) spans 487–496 (VPNNETTDNN). Positions 509 to 519 (ESADDNNENPE) are enriched in acidic residues. The span at 531–542 (NPNNNENTYGNN) shows a compositional bias: low complexity. Composition is skewed to acidic residues over residues 559–602 (SDSD…DDRD) and 627–675 (ISDE…DLED). Phosphoserine occurs at positions 658, 668, and 671.

Belongs to the nucleosome assembly protein (NAP) family. In terms of assembly, interacts with histones. Interacts with CASK. Part of a complex containing CASK, TBR1 and TSPYL2. Post-translationally, phosphorylation at Ser-20 and/or Thr-340 impairs function on cell proliferation. In terms of tissue distribution, ubiquitously expressed, with highest levels in brain, testis and heart, and lowest levels in liver and pancreas.

It localises to the nucleus. Its subcellular location is the cytoplasm. Functionally, part of the CASK/TBR1/TSPYL2 transcriptional complex which modulates gene expression in response to neuronal synaptic activity, probably by facilitating nucleosome assembly. May inhibit cell proliferation by inducing p53-dependent CDKN1A expression. This is Testis-specific Y-encoded-like protein 2 (TSPYL2) from Homo sapiens (Human).